A 535-amino-acid chain; its full sequence is ATP-dependent RNA helicase DBP3 (535 aa).

The span at 1–21 shows a compositional bias: basic and acidic residues; the sequence is MSKHELKDKKRKSVDGEDVSK. The disordered stretch occupies residues 1-82; it reads MSKHELKDKK…GSETAPVGDS (82 aa). Residues 22 to 33 are compositionally biased toward basic residues; the sequence is SKKVKKDKKDKK. Residues 34-72 are compositionally biased toward basic and acidic residues; that stretch reads DKKAKDGNDKVKDKKDKNKKDKSKTDKNLKEVQETEAHT. The short motif at 125-151 is the Q motif element; sequence LSFSHLNLHSAIQKEISKFPKPTPIQA. The region spanning 154-327 is the Helicase ATP-binding domain; the sequence is WPYLLAGKDV…STFMRAPVKV (174 aa). 167-174 contributes to the ATP binding site; the sequence is AETGSGKT. Positions 274-277 match the DEAD box motif; that stretch reads DEAD. The Helicase C-terminal domain occupies 352-505; it reads KKEKRLLELL…PVPEELMKFG (154 aa).

It belongs to the DEAD box helicase family. DDX5/DBP2 subfamily.

Its subcellular location is the nucleus. The protein localises to the nucleolus. The catalysed reaction is ATP + H2O = ADP + phosphate + H(+). In terms of biological role, ATP-dependent RNA helicase required for 60S ribosomal subunit synthesis. Involved in efficient pre-rRNA processing, predominantly at site A3, which is necessary for the normal formation of 25S and 5.8S rRNAs. This is ATP-dependent RNA helicase DBP3 (DBP3) from Eremothecium gossypii (strain ATCC 10895 / CBS 109.51 / FGSC 9923 / NRRL Y-1056) (Yeast).